The following is a 337-amino-acid chain: tRNA N6-adenosine threonylcarbamoyltransferase (337 aa).

2 residues coordinate Fe cation: H111 and H115. Substrate is bound by residues 134–138 (LVSGG), D167, G180, and N272. Residue D300 coordinates Fe cation.

This sequence belongs to the KAE1 / TsaD family. The cofactor is Fe(2+).

The protein resides in the cytoplasm. It catalyses the reaction L-threonylcarbamoyladenylate + adenosine(37) in tRNA = N(6)-L-threonylcarbamoyladenosine(37) in tRNA + AMP + H(+). In terms of biological role, required for the formation of a threonylcarbamoyl group on adenosine at position 37 (t(6)A37) in tRNAs that read codons beginning with adenine. Is involved in the transfer of the threonylcarbamoyl moiety of threonylcarbamoyl-AMP (TC-AMP) to the N6 group of A37, together with TsaE and TsaB. TsaD likely plays a direct catalytic role in this reaction. The polypeptide is tRNA N6-adenosine threonylcarbamoyltransferase (Cronobacter sakazakii (strain ATCC BAA-894) (Enterobacter sakazakii)).